Consider the following 209-residue polypeptide: Uracil phosphoribosyltransferase (209 aa).

Residues Arg-79, Arg-104, and 131-139 (DPMLATGGT) contribute to the 5-phospho-alpha-D-ribose 1-diphosphate site. Uracil contacts are provided by residues Ile-194 and 199 to 201 (GDA). A 5-phospho-alpha-D-ribose 1-diphosphate-binding site is contributed by Asp-200.

This sequence belongs to the UPRTase family. The cofactor is Mg(2+).

The catalysed reaction is UMP + diphosphate = 5-phospho-alpha-D-ribose 1-diphosphate + uracil. The protein operates within pyrimidine metabolism; UMP biosynthesis via salvage pathway; UMP from uracil: step 1/1. With respect to regulation, allosterically activated by GTP. Its function is as follows. Catalyzes the conversion of uracil and 5-phospho-alpha-D-ribose 1-diphosphate (PRPP) to UMP and diphosphate. This is Uracil phosphoribosyltransferase from Pseudoalteromonas atlantica (strain T6c / ATCC BAA-1087).